The sequence spans 312 residues: GTP cyclohydrolase MptA (312 aa).

Belongs to the GTP cyclohydrolase IV family. Homodimer. Fe(2+) is required as a cofactor.

The enzyme catalyses GTP + H2O = 7,8-dihydroneopterin 2',3'-cyclic phosphate + formate + diphosphate + H(+). The protein operates within cofactor biosynthesis; 5,6,7,8-tetrahydromethanopterin biosynthesis. In terms of biological role, converts GTP to 7,8-dihydro-D-neopterin 2',3'-cyclic phosphate, the first intermediate in the biosynthesis of coenzyme methanopterin. The protein is GTP cyclohydrolase MptA of Methanococcus vannielii (strain ATCC 35089 / DSM 1224 / JCM 13029 / OCM 148 / SB).